The following is a 444-amino-acid chain: Na(+)-translocating NADH-quinone reductase subunit A (444 aa).

It belongs to the NqrA family. As to quaternary structure, composed of six subunits; NqrA, NqrB, NqrC, NqrD, NqrE and NqrF.

The enzyme catalyses a ubiquinone + n Na(+)(in) + NADH + H(+) = a ubiquinol + n Na(+)(out) + NAD(+). NQR complex catalyzes the reduction of ubiquinone-1 to ubiquinol by two successive reactions, coupled with the transport of Na(+) ions from the cytoplasm to the periplasm. NqrA to NqrE are probably involved in the second step, the conversion of ubisemiquinone to ubiquinol. The chain is Na(+)-translocating NADH-quinone reductase subunit A from Shewanella denitrificans (strain OS217 / ATCC BAA-1090 / DSM 15013).